Here is a 729-residue protein sequence, read N- to C-terminus: 1,4-alpha-glucan branching enzyme GlgB (729 aa).

Asp409 acts as the Nucleophile in catalysis. Glu462 (proton donor) is an active-site residue.

It belongs to the glycosyl hydrolase 13 family. GlgB subfamily. In terms of assembly, monomer.

The enzyme catalyses Transfers a segment of a (1-&gt;4)-alpha-D-glucan chain to a primary hydroxy group in a similar glucan chain.. It participates in glycan biosynthesis; glycogen biosynthesis. Functionally, catalyzes the formation of the alpha-1,6-glucosidic linkages in glycogen by scission of a 1,4-alpha-linked oligosaccharide from growing alpha-1,4-glucan chains and the subsequent attachment of the oligosaccharide to the alpha-1,6 position. The sequence is that of 1,4-alpha-glucan branching enzyme GlgB from Saccharophagus degradans (strain 2-40 / ATCC 43961 / DSM 17024).